The sequence spans 1038 residues: Probable ubiquitin conjugation factor E4 (1038 aa).

Disordered stretches follow at residues 430–459 (ANDAGRENGNESRLLQSKEATSSSSNASGQ) and 1010–1038 (SHQSKKRTSGEDSSNKERIQTTNSDMLID). The segment covering 446 to 459 (SKEATSSSSNASGQ) has biased composition (low complexity). The region spanning 940-1014 (EIPDEFLDPI…DEFVKSHQSK (75 aa)) is the U-box domain. Residues 1017–1028 (TSGEDSSNKERI) show a composition bias toward basic and acidic residues. Residues 1029–1038 (QTTNSDMLID) are compositionally biased toward polar residues.

Belongs to the ubiquitin conjugation factor E4 family.

Its subcellular location is the cytoplasm. The protein resides in the nucleus. It carries out the reaction S-ubiquitinyl-[E2 ubiquitin-conjugating enzyme]-L-cysteine + [acceptor protein]-L-lysine = [E2 ubiquitin-conjugating enzyme]-L-cysteine + N(6)-ubiquitinyl-[acceptor protein]-L-lysine.. The protein operates within protein modification; protein ubiquitination. In terms of biological role, ubiquitin-protein ligase that may function as an E3 ligase in conjunction with specific E1 and E2 ligases. May also function as an E4 ligase mediating the assembly of polyubiquitin chain assembly on substrates monoubiquitinated by another E3 ubiquitin ligase. In Arabidopsis thaliana (Mouse-ear cress), this protein is Probable ubiquitin conjugation factor E4 (PUB1).